The chain runs to 107 residues: Urease subunit beta (107 aa).

This sequence belongs to the urease beta subunit family. In terms of assembly, heterotrimer of UreA (gamma), UreB (beta) and UreC (alpha) subunits. Three heterotrimers associate to form the active enzyme.

The protein localises to the cytoplasm. It catalyses the reaction urea + 2 H2O + H(+) = hydrogencarbonate + 2 NH4(+). It participates in nitrogen metabolism; urea degradation; CO(2) and NH(3) from urea (urease route): step 1/1. This chain is Urease subunit beta, found in Escherichia coli.